The chain runs to 711 residues: MLLAAGARYARRLCGRGAAAALQGRTGRSCARDVSTSWSPVGAAFNVKPQSHLWNLLGERRGLFGVPELSTPEGFQVAQEEALKKTEWLVERACSTPPGPQTVLIFDELSDCLCRVADLADFVKIGHPDPAFREAAQEACRSIGTMVEKLNTNVELYQSLQRLLGDKKLMESLDAETRRVAELFMFDFEISGIHLDEEKRRRAVDLNVKILDLSNAFLMRTNFPNKIRKSLLPEHIQHHFARDGSHLIIDGLHAEASDDLVREAAYKIFLYPNADQLKCLEELLSSRDLLAKLVGYSTFSHRALQGTIAQTPETVMQFLEKLSEKLSERTRKDFKMMQGMKTKLNPQNSKLMPWDPPYYSGVIRAERYNIEPSLYCPFLSLGACMEGLNVLFNKLLGITLYAEQTFKGEVWCNDIRKLAVVHESEGLLGYIYCDFFQRANKPQQDCHFTIRGGRLKEDGSYQLPVVVLMLNLPHASRDFPTLLTPGMMENLFHEMGHAMHSMLGRTRYQHVTGTRCPTDFAEVPSILMEYFSNDYRVVSQFAKHYQTGQPLPKAMVSRLCESKKVCTAAEMQLQVFYAALDQIYHGQHPLKKSTTDILMETQEQFYGLPYVPDTAWQLRFSHLVGYGAKYYSYLMSRAVASMIWKECFLQDPFNRAAGERYRREMLAHGGGKEPMLMIQGMLQKCPSIDDFVDALVSDMNLDFETFFLDSK.

The N-terminal 33 residues, 1-33, are a transit peptide targeting the mitochondrion; it reads MLLAAGARYARRLCGRGAAAALQGRTGRSCARD. Position 124 is an N6-acetyllysine (lysine 124). Position 493 (histidine 493) interacts with Zn(2+). The active site involves glutamate 494. Residues histidine 497 and histidine 500 each contribute to the Zn(2+) site.

This sequence belongs to the peptidase M3 family. As to quaternary structure, monomer. Zn(2+) is required as a cofactor.

The protein resides in the mitochondrion matrix. It catalyses the reaction Release of an N-terminal octapeptide as second stage of processing of some proteins imported into the mitochondrion.. Its activity is regulated as follows. Activity is divalent cation-dependent. It is stimulated by manganese, magnesium or calcium ions and reversibly inhibited by zinc, cobalt and iron. Cleaves proteins, imported into the mitochondrion, to their mature size. The sequence is that of Mitochondrial intermediate peptidase (Mipep) from Mus musculus (Mouse).